We begin with the raw amino-acid sequence, 267 residues long: Shikimate dehydrogenase (NADP(+)) (267 aa).

Shikimate is bound by residues 14 to 16 (SLS) and Thr-61. Lys-65 serves as the catalytic Proton acceptor. Residues Asn-86 and Asp-101 each coordinate shikimate. NADP(+) is bound by residues 126–130 (GAGGA), 150–155 (NRTHSK), and Leu-213. Tyr-215 serves as a coordination point for shikimate. Gly-236 is an NADP(+) binding site.

It belongs to the shikimate dehydrogenase family. As to quaternary structure, homodimer.

It catalyses the reaction shikimate + NADP(+) = 3-dehydroshikimate + NADPH + H(+). It participates in metabolic intermediate biosynthesis; chorismate biosynthesis; chorismate from D-erythrose 4-phosphate and phosphoenolpyruvate: step 4/7. Functionally, involved in the biosynthesis of the chorismate, which leads to the biosynthesis of aromatic amino acids. Catalyzes the reversible NADPH linked reduction of 3-dehydroshikimate (DHSA) to yield shikimate (SA). The polypeptide is Shikimate dehydrogenase (NADP(+)) (Vesicomyosocius okutanii subsp. Calyptogena okutanii (strain HA)).